The sequence spans 478 residues: ATP synthase subunit beta (478 aa).

G152–T159 lines the ATP pocket.

The protein belongs to the ATPase alpha/beta chains family. F-type ATPases have 2 components, CF(1) - the catalytic core - and CF(0) - the membrane proton channel. CF(1) has five subunits: alpha(3), beta(3), gamma(1), delta(1), epsilon(1). CF(0) has three main subunits: a(1), b(2) and c(9-12). The alpha and beta chains form an alternating ring which encloses part of the gamma chain. CF(1) is attached to CF(0) by a central stalk formed by the gamma and epsilon chains, while a peripheral stalk is formed by the delta and b chains.

It is found in the cell membrane. It catalyses the reaction ATP + H2O + 4 H(+)(in) = ADP + phosphate + 5 H(+)(out). Its function is as follows. Produces ATP from ADP in the presence of a proton gradient across the membrane. The catalytic sites are hosted primarily by the beta subunits. The polypeptide is ATP synthase subunit beta (Wolbachia pipientis subsp. Culex pipiens (strain wPip)).